Consider the following 199-residue polypeptide: Charged multivesicular body protein 1b (199 aa).

The stretch at 26–48 (DKEEKAEKAKIKKAIQKGNMEVA) forms a coiled coil. Positions 132–156 (MEDTMSSTTTLTTPQNQVDMLLQEM) are interaction with IST1. Positions 167–199 (ELPQGQTGSVGTSVASAEQDELSQRLARLRDQV) are disordered. The span at 170-182 (QGQTGSVGTSVAS) shows a compositional bias: polar residues. The interval 174–199 (GSVGTSVASAEQDELSQRLARLRDQV) is interaction with SPAST. Residues 178–199 (TSVASAEQDELSQRLARLRDQV) adopt a coiled-coil conformation. The interaction with VPS4A, MITD1 and STAMBP stretch occupies residues 180–196 (VASAEQDELSQRLARLR). Residues 180–199 (VASAEQDELSQRLARLRDQV) form an interaction with VTA1 region. The interaction with VPS4B stretch occupies residues 183 to 199 (AEQDELSQRLARLRDQV). Residues 186–196 (DELSQRLARLR) carry the MIT-interacting motif motif.

This sequence belongs to the SNF7 family. Probable peripherally associated component of the endosomal sorting required for transport complex III (ESCRT-III). ESCRT-III components are thought to multimerize to form a flat lattice on the perimeter membrane of the endosome. Several assembly forms of ESCRT-III may exist that interact and act sequentially. Interacts with CHMP1A. Interacts with VTA1; the interaction probably involves the open conformation of CHMP1B. Interacts with CHMP2A. Interacts with VPS4A; the interaction is direct. Interacts with VPS4B; the interaction is direct. Interacts with SPAST (via MIT domain); the interaction is direct. Interacts with IST1. Interacts with MITD1. Interacts with STAMBP. As to expression, widely expressed. Expressed in pancreas, kidney, skeletal muscle, liver, lung, placenta and brain.

The protein resides in the cytoplasm. It localises to the cytosol. The protein localises to the endosome. It is found in the late endosome membrane. Probable peripherally associated component of the endosomal sorting required for transport complex III (ESCRT-III) which is involved in multivesicular bodies (MVBs) formation and sorting of endosomal cargo proteins into MVBs. MVBs contain intraluminal vesicles (ILVs) that are generated by invagination and scission from the limiting membrane of the endosome and mostly are delivered to lysosomes enabling degradation of membrane proteins, such as stimulated growth factor receptors, lysosomal enzymes and lipids. The MVB pathway appears to require the sequential function of ESCRT-O, -I,-II and -III complexes. ESCRT-III proteins mostly dissociate from the invaginating membrane before the ILV is released. The ESCRT machinery also functions in topologically equivalent membrane fission events, such as the terminal stages of cytokinesis and the budding of enveloped viruses (HIV-1 and other lentiviruses). ESCRT-III proteins are believed to mediate the necessary vesicle extrusion and/or membrane fission activities, possibly in conjunction with the AAA ATPase VPS4. Involved in cytokinesis. Involved in recruiting VPS4A and/or VPS4B and SPAST to the midbody of dividing cells. Involved in HIV-1 p6- and p9-dependent virus release. The protein is Charged multivesicular body protein 1b (CHMP1B) of Homo sapiens (Human).